A 279-amino-acid chain; its full sequence is NH(3)-dependent NAD(+) synthetase (279 aa).

46–53 (GVSGGQDS) lines the ATP pocket. A Mg(2+)-binding site is contributed by Asp52. Arg139 contributes to the deamido-NAD(+) binding site. ATP is bound at residue Thr159. Residue Glu164 coordinates Mg(2+). Lys172 and Asp179 together coordinate deamido-NAD(+). ATP-binding residues include Lys188 and Thr210. 259–260 (HK) serves as a coordination point for deamido-NAD(+).

The protein belongs to the NAD synthetase family. Homodimer.

The catalysed reaction is deamido-NAD(+) + NH4(+) + ATP = AMP + diphosphate + NAD(+) + H(+). Its pathway is cofactor biosynthesis; NAD(+) biosynthesis; NAD(+) from deamido-NAD(+) (ammonia route): step 1/1. Functionally, catalyzes the ATP-dependent amidation of deamido-NAD to form NAD. Uses ammonia as a nitrogen source. In Leifsonia xyli subsp. xyli (strain CTCB07), this protein is NH(3)-dependent NAD(+) synthetase.